Here is a 407-residue protein sequence, read N- to C-terminus: PWWP domain-containing protein 3 (407 aa).

Residues 1-46 (MMVARTRSQKRKLEEINNQKKIKTKKKATGQQTSNTKNLRDVKKKG) are disordered. A PWWP domain is found at 63–129 (NGEYVLAKMS…SSNVLPLTVD (67 aa)). A phosphoserine mark is found at S160 and S162. Residues 163-248 (DVEEDEFEPE…PIPSPKKTAK (86 aa)) are disordered. A compositionally biased stretch (basic and acidic residues) spans 172–208 (ENTRKKLQKPIEKPKKEKIEATPKIDGGKRLKNEKSS). 3 positions are modified to phosphoserine: S236, S238, and S242.

As to quaternary structure, component of the mst2 complex composed of at least eaf6, mst2, nto1, pdp3, ptf1, ptf2 and tfg3.

It is found in the nucleus. Functionally, component of the mst2 complex which is a highly specific H3 lysine 14 (H3K14) acetyltransferase that functions together with gcn5 to regulate global levels of H3K14 acetylation (H3K14ac), critical for DNA damage checkpoint activation. The protein is PWWP domain-containing protein 3 (pdp3) of Schizosaccharomyces pombe (strain 972 / ATCC 24843) (Fission yeast).